The primary structure comprises 249 residues: Aspartate/glutamate leucyltransferase (249 aa).

This sequence belongs to the R-transferase family. Bpt subfamily.

Its subcellular location is the cytoplasm. It carries out the reaction N-terminal L-glutamyl-[protein] + L-leucyl-tRNA(Leu) = N-terminal L-leucyl-L-glutamyl-[protein] + tRNA(Leu) + H(+). The enzyme catalyses N-terminal L-aspartyl-[protein] + L-leucyl-tRNA(Leu) = N-terminal L-leucyl-L-aspartyl-[protein] + tRNA(Leu) + H(+). Functionally, functions in the N-end rule pathway of protein degradation where it conjugates Leu from its aminoacyl-tRNA to the N-termini of proteins containing an N-terminal aspartate or glutamate. The chain is Aspartate/glutamate leucyltransferase from Brucella melitensis biotype 2 (strain ATCC 23457).